Reading from the N-terminus, the 179-residue chain is Large ribosomal subunit protein uL6c (179 aa).

This sequence belongs to the universal ribosomal protein uL6 family. In terms of assembly, part of the 50S ribosomal subunit.

The protein localises to the plastid. The protein resides in the chloroplast. Functionally, binds 23S rRNA. This Trieres chinensis (Marine centric diatom) protein is Large ribosomal subunit protein uL6c (rpl6).